Reading from the N-terminus, the 551-residue chain is Arginine--tRNA ligase (551 aa).

The 'HIGH' region signature appears at 123 to 133; that stretch reads ANPTGPLTIGR.

Belongs to the class-I aminoacyl-tRNA synthetase family. In terms of assembly, monomer.

It is found in the cytoplasm. The catalysed reaction is tRNA(Arg) + L-arginine + ATP = L-arginyl-tRNA(Arg) + AMP + diphosphate. In Chlorobaculum tepidum (strain ATCC 49652 / DSM 12025 / NBRC 103806 / TLS) (Chlorobium tepidum), this protein is Arginine--tRNA ligase.